A 302-amino-acid chain; its full sequence is Acetylglutamate kinase (302 aa).

Substrate contacts are provided by residues 67-68 (GG), R89, and N189.

It belongs to the acetylglutamate kinase family. ArgB subfamily.

It localises to the cytoplasm. The catalysed reaction is N-acetyl-L-glutamate + ATP = N-acetyl-L-glutamyl 5-phosphate + ADP. It functions in the pathway amino-acid biosynthesis; L-arginine biosynthesis; N(2)-acetyl-L-ornithine from L-glutamate: step 2/4. Its function is as follows. Catalyzes the ATP-dependent phosphorylation of N-acetyl-L-glutamate. In Streptomyces clavuligerus, this protein is Acetylglutamate kinase.